The primary structure comprises 465 residues: Methionine aminopeptidase 2-2 (465 aa).

The span at 1–13 (MGSKTPNDHRRGP) shows a compositional bias: basic and acidic residues. Positions 1-92 (MGSKTPNDHR…KKKTLLGGLQ (92 aa)) are disordered. Acidic residues predominate over residues 44 to 55 (GETEDGEDEDDD). Positions 71 to 86 (TKKKNKRKKNKKKKKT) are enriched in basic residues. H217 contacts substrate. A divalent metal cation-binding residues include D238, D249, and H318. H326 serves as a coordination point for substrate. The a divalent metal cation site is built by E351 and E446.

Belongs to the peptidase M24A family. Methionine aminopeptidase eukaryotic type 2 subfamily. It depends on Co(2+) as a cofactor. Zn(2+) is required as a cofactor. Requires Mn(2+) as cofactor. The cofactor is Fe(2+).

It is found in the cytoplasm. The catalysed reaction is Release of N-terminal amino acids, preferentially methionine, from peptides and arylamides.. Cotranslationally removes the N-terminal methionine from nascent proteins. The N-terminal methionine is often cleaved when the second residue in the primary sequence is small and uncharged (Met-Ala-, Cys, Gly, Pro, Ser, Thr, or Val). This Ajellomyces dermatitidis (strain ER-3 / ATCC MYA-2586) (Blastomyces dermatitidis) protein is Methionine aminopeptidase 2-2.